The primary structure comprises 70 residues: MELIATAIIIGLGALGAGIGNGLIVNGTVLGQARQPELKNELRQTMFIGIGLVEALPIIGVAVGFLLLNS.

Helical transmembrane passes span 4–24 (IATAIIIGLGALGAGIGNGLI) and 47–67 (FIGIGLVEALPIIGVAVGFLL).

This sequence belongs to the ATPase C chain family. F-type ATPases have 2 components, F(1) - the catalytic core - and F(0) - the membrane proton channel. F(1) has five subunits: alpha(3), beta(3), gamma(1), delta(1), epsilon(1). F(0) has three main subunits: a(1), b(2) and c(10-14). The alpha and beta chains form an alternating ring which encloses part of the gamma chain. F(1) is attached to F(0) by a central stalk formed by the gamma and epsilon chains, while a peripheral stalk is formed by the delta and b chains.

It is found in the cell membrane. F(1)F(0) ATP synthase produces ATP from ADP in the presence of a proton or sodium gradient. F-type ATPases consist of two structural domains, F(1) containing the extramembraneous catalytic core and F(0) containing the membrane proton channel, linked together by a central stalk and a peripheral stalk. During catalysis, ATP synthesis in the catalytic domain of F(1) is coupled via a rotary mechanism of the central stalk subunits to proton translocation. Its function is as follows. Key component of the F(0) channel; it plays a direct role in translocation across the membrane. A homomeric c-ring of between 10-14 subunits forms the central stalk rotor element with the F(1) delta and epsilon subunits. In Exiguobacterium sibiricum (strain DSM 17290 / CCUG 55495 / CIP 109462 / JCM 13490 / 255-15), this protein is ATP synthase subunit c.